A 437-amino-acid chain; its full sequence is Chromosomal replication initiator protein DnaA (437 aa).

Positions 1–72 (MEQFNAFKSL…ESLYEGIKSV (72 aa)) are domain I, interacts with DnaA modulators. Positions 72–99 (VNFVNEQDFFFNLAKLEENSRDTLYQNS) are domain II. Residues 100 to 320 (GLSKNYTFQN…GIATKLLFFA (221 aa)) form a domain III, AAA+ region region. ATP is bound by residues Gly144, Gly146, Lys147, and Thr148. The interval 321–437 (KTSKQNLINT…LRDVITSLVI (117 aa)) is domain IV, binds dsDNA.

Belongs to the DnaA family. As to quaternary structure, oligomerizes as a right-handed, spiral filament on DNA at oriC.

It is found in the cytoplasm. Plays an essential role in the initiation and regulation of chromosomal replication. ATP-DnaA binds to the origin of replication (oriC) to initiate formation of the DNA replication initiation complex once per cell cycle. Binds the DnaA box (a 9 base pair repeat at the origin) and separates the double-stranded (ds)DNA. Forms a right-handed helical filament on oriC DNA; dsDNA binds to the exterior of the filament while single-stranded (ss)DNA is stabiized in the filament's interior. The ATP-DnaA-oriC complex binds and stabilizes one strand of the AT-rich DNA unwinding element (DUE), permitting loading of DNA polymerase. After initiation quickly degrades to an ADP-DnaA complex that is not apt for DNA replication. Binds acidic phospholipids. The sequence is that of Chromosomal replication initiator protein DnaA from Mycoplasma genitalium (strain ATCC 33530 / DSM 19775 / NCTC 10195 / G37) (Mycoplasmoides genitalium).